A 206-amino-acid polypeptide reads, in one-letter code: Alpha-amylase/trypsin inhibitor (206 aa).

8 disulfide bridges follow: C9/C205, C51/C61, C66/C72, C118/C194, C124/C177, C132/C142, C146/C155, and C156/C164.

This sequence belongs to the thaumatin family.

In terms of biological role, inhibits both trypsin and alpha-amylase. Inhibits the growth of some plant fungal pathogens. This Zea mays (Maize) protein is Alpha-amylase/trypsin inhibitor.